The chain runs to 192 residues: uncharacterized protein (192 aa).

The 132-residue stretch at 29-160 folds into the Nudix hydrolase domain; that stretch reads HRQAAVLIPI…PLDIYRRGDS (132 aa). The Nudix box motif lies at 67–89; sequence GAVDDTDASVIAAALREAEEEVA. 2 residues coordinate Mg(2+): Glu83 and Glu87.

The protein belongs to the Nudix hydrolase family. PCD1 subfamily. Requires Mn(2+) as cofactor. Mg(2+) is required as a cofactor.

Probably mediates the hydrolysis of some nucleoside diphosphate derivatives. This is an uncharacterized protein from Shigella sonnei (strain Ss046).